Consider the following 121-residue polypeptide: MARIAGVDLPRDKRIVIGLTYIFGIGNTTAQKILKDAEVSEDIRVRDLTADQEDKIRAEVDNYLVEGDLRRTVSLNIKRLQEIGSYRGMRHRRGLPVRGQHTKNNARTRKGKKVSIAGRKK.

The disordered stretch occupies residues 89–121 (MRHRRGLPVRGQHTKNNARTRKGKKVSIAGRKK).

The protein belongs to the universal ribosomal protein uS13 family. As to quaternary structure, part of the 30S ribosomal subunit. Forms a loose heterodimer with protein S19. Forms two bridges to the 50S subunit in the 70S ribosome.

In terms of biological role, located at the top of the head of the 30S subunit, it contacts several helices of the 16S rRNA. In the 70S ribosome it contacts the 23S rRNA (bridge B1a) and protein L5 of the 50S subunit (bridge B1b), connecting the 2 subunits; these bridges are implicated in subunit movement. Contacts the tRNAs in the A and P-sites. This is Small ribosomal subunit protein uS13 from Pediococcus pentosaceus (strain ATCC 25745 / CCUG 21536 / LMG 10740 / 183-1w).